The primary structure comprises 166 residues: Large ribosomal subunit protein uL10 (166 aa).

It belongs to the universal ribosomal protein uL10 family. In terms of assembly, part of the ribosomal stalk of the 50S ribosomal subunit. The N-terminus interacts with L11 and the large rRNA to form the base of the stalk. The C-terminus forms an elongated spine to which L12 dimers bind in a sequential fashion forming a multimeric L10(L12)X complex.

Functionally, forms part of the ribosomal stalk, playing a central role in the interaction of the ribosome with GTP-bound translation factors. The polypeptide is Large ribosomal subunit protein uL10 (rplJ) (Streptococcus pyogenes serotype M18 (strain MGAS8232)).